An 861-amino-acid polypeptide reads, in one-letter code: Leucine--tRNA ligase (861 aa).

Residues 42 to 52 carry the 'HIGH' region motif; sequence PYPSGRLHMGH. The short motif at 619 to 623 is the 'KMSKS' region element; the sequence is KMSKS. Lys-622 lines the ATP pocket.

This sequence belongs to the class-I aminoacyl-tRNA synthetase family.

Its subcellular location is the cytoplasm. It carries out the reaction tRNA(Leu) + L-leucine + ATP = L-leucyl-tRNA(Leu) + AMP + diphosphate. The protein is Leucine--tRNA ligase of Haemophilus influenzae (strain 86-028NP).